We begin with the raw amino-acid sequence, 193 residues long: Peptidyl-tRNA hydrolase (193 aa).

Tyrosine 14 is a binding site for tRNA. The Proton acceptor role is filled by histidine 19. 3 residues coordinate tRNA: phenylalanine 64, asparagine 66, and asparagine 112.

The protein belongs to the PTH family. In terms of assembly, monomer.

It is found in the cytoplasm. The catalysed reaction is an N-acyl-L-alpha-aminoacyl-tRNA + H2O = an N-acyl-L-amino acid + a tRNA + H(+). Its function is as follows. Hydrolyzes ribosome-free peptidyl-tRNAs (with 1 or more amino acids incorporated), which drop off the ribosome during protein synthesis, or as a result of ribosome stalling. Functionally, catalyzes the release of premature peptidyl moieties from peptidyl-tRNA molecules trapped in stalled 50S ribosomal subunits, and thus maintains levels of free tRNAs and 50S ribosomes. In Bartonella henselae (strain ATCC 49882 / DSM 28221 / CCUG 30454 / Houston 1) (Rochalimaea henselae), this protein is Peptidyl-tRNA hydrolase.